Reading from the N-terminus, the 213-residue chain is Probable thymidylate kinase 2 (213 aa).

ATP is bound at residue 10 to 17; it reads GIDGSGKS.

This sequence belongs to the thymidylate kinase family.

It carries out the reaction dTMP + ATP = dTDP + ADP. This is Probable thymidylate kinase 2 (tmk2) from Saccharolobus solfataricus (strain ATCC 35092 / DSM 1617 / JCM 11322 / P2) (Sulfolobus solfataricus).